Here is a 420-residue protein sequence, read N- to C-terminus: Ribosome biogenesis protein WDR12 homolog (420 aa).

Positions 10–92 (VQVHLKTKQE…EDAIEIEYVE (83 aa)) are ubiquitin-like (UBL) domain. WD repeat units follow at residues 104–142 (LHDD…LTIS), 143–185 (GHTA…NSVE), 192–231 (GHER…AAEG), 250–288 (GHRE…IKTE), 290–329 (STNK…GSVV), 335–375 (GHNA…APLY), and 379–417 (GHGE…AEDT).

This sequence belongs to the WD repeat WDR12/YTM1 family.

It is found in the nucleus. Its subcellular location is the nucleolus. It localises to the nucleoplasm. In terms of biological role, required for maturation of ribosomal RNAs and formation of the large ribosomal subunit. The sequence is that of Ribosome biogenesis protein WDR12 homolog from Drosophila erecta (Fruit fly).